Reading from the N-terminus, the 174-residue chain is Ribosome maturation factor RimP (174 aa).

It belongs to the RimP family.

The protein localises to the cytoplasm. In terms of biological role, required for maturation of 30S ribosomal subunits. The polypeptide is Ribosome maturation factor RimP (Acinetobacter baumannii (strain SDF)).